Here is a 322-residue protein sequence, read N- to C-terminus: Arginase-1 (322 aa).

A compositionally biased stretch (low complexity) spans 1–12 (MSSKSKSIGIIG). The tract at residues 1 to 26 (MSSKSKSIGIIGAPFSKGQPRGGVEE) is disordered. The residue at position 7 (S7) is a Phosphoserine. At K17 the chain carries N6-succinyllysine. S62 carries the phosphoserine modification. Positions 101, 124, 126, and 128 each coordinate Mn(2+). Substrate contacts are provided by residues 126–130 (HTDIN) and 137–139 (SGN). At S163 the chain carries Phosphoserine. Residue D183 participates in substrate binding. Mn(2+) is bound by residues D232 and D234. The substrate site is built by T246 and E277.

It belongs to the arginase family. In terms of assembly, homotrimer. Interacts with CMTM6. Mn(2+) serves as cofactor.

The protein resides in the cytoplasm. The enzyme catalyses L-arginine + H2O = urea + L-ornithine. The protein operates within nitrogen metabolism; urea cycle; L-ornithine and urea from L-arginine: step 1/1. The sequence is that of Arginase-1 (ARG1) from Oryctolagus cuniculus (Rabbit).